A 98-amino-acid chain; its full sequence is Class II hydrophobin 5 (98 aa).

The N-terminal stretch at 1–17 (MQFSLALVTLLATAVSA) is a signal peptide. Disulfide bonds link Cys-30/Cys-78, Cys-39/Cys-69, Cys-40/Cys-52, and Cys-79/Cys-90.

Belongs to the cerato-ulmin hydrophobin family.

The protein resides in the secreted. It localises to the cell wall. Its function is as follows. Aerial growth, conidiation, and dispersal of filamentous fungi in the environment rely upon a capability of their secreting small amphipathic proteins called hydrophobins (HPBs) with low sequence identity. Class I can self-assemble into an outermost layer of rodlet bundles on aerial cell surfaces, conferring cellular hydrophobicity that supports fungal growth, development and dispersal; whereas Class II form highly ordered films at water-air interfaces through intermolecular interactions but contribute nothing to the rodlet structure. Does not seem to be important for the ability to cause seedling disease. The polypeptide is Class II hydrophobin 5 (Gibberella moniliformis (Maize ear and stalk rot fungus)).